We begin with the raw amino-acid sequence, 485 residues long: UDP-N-acetylmuramoyl-L-alanyl-D-glutamate--2,6-diaminopimelate ligase (485 aa).

Position 30 (serine 30) interacts with UDP-N-acetyl-alpha-D-muramoyl-L-alanyl-D-glutamate. 111–117 (GTNGKTT) lines the ATP pocket. UDP-N-acetyl-alpha-D-muramoyl-L-alanyl-D-glutamate-binding positions include 153–154 (TT), serine 180, glutamine 186, and arginine 188. Position 220 is an N6-carboxylysine (lysine 220). Residues arginine 378, 402-405 (DNPR), glycine 455, and glutamate 459 each bind meso-2,6-diaminopimelate. The short motif at 402–405 (DNPR) is the Meso-diaminopimelate recognition motif element.

Belongs to the MurCDEF family. MurE subfamily. Mg(2+) is required as a cofactor. Post-translationally, carboxylation is probably crucial for Mg(2+) binding and, consequently, for the gamma-phosphate positioning of ATP.

The protein localises to the cytoplasm. It catalyses the reaction UDP-N-acetyl-alpha-D-muramoyl-L-alanyl-D-glutamate + meso-2,6-diaminopimelate + ATP = UDP-N-acetyl-alpha-D-muramoyl-L-alanyl-gamma-D-glutamyl-meso-2,6-diaminopimelate + ADP + phosphate + H(+). It participates in cell wall biogenesis; peptidoglycan biosynthesis. Functionally, catalyzes the addition of meso-diaminopimelic acid to the nucleotide precursor UDP-N-acetylmuramoyl-L-alanyl-D-glutamate (UMAG) in the biosynthesis of bacterial cell-wall peptidoglycan. The chain is UDP-N-acetylmuramoyl-L-alanyl-D-glutamate--2,6-diaminopimelate ligase from Bacteroides fragilis (strain ATCC 25285 / DSM 2151 / CCUG 4856 / JCM 11019 / LMG 10263 / NCTC 9343 / Onslow / VPI 2553 / EN-2).